We begin with the raw amino-acid sequence, 1201 residues long: DNA-directed RNA polymerase subunit beta' (1201 aa).

Residues Cys-60, Cys-62, Cys-75, and Cys-78 each contribute to the Zn(2+) site. Mg(2+)-binding residues include Asp-449, Asp-451, and Asp-453. Zn(2+)-binding residues include Cys-818, Cys-892, Cys-899, and Cys-902.

The protein belongs to the RNA polymerase beta' chain family. In terms of assembly, the RNAP catalytic core consists of 2 alpha, 1 beta, 1 beta' and 1 omega subunit. When a sigma factor is associated with the core the holoenzyme is formed, which can initiate transcription. It depends on Mg(2+) as a cofactor. Zn(2+) serves as cofactor.

The enzyme catalyses RNA(n) + a ribonucleoside 5'-triphosphate = RNA(n+1) + diphosphate. Its function is as follows. DNA-dependent RNA polymerase catalyzes the transcription of DNA into RNA using the four ribonucleoside triphosphates as substrates. This chain is DNA-directed RNA polymerase subunit beta', found in Listeria innocua serovar 6a (strain ATCC BAA-680 / CLIP 11262).